The following is a 353-amino-acid chain: Photosystem II D2 protein (353 aa).

Residue Thr2 is modified to N-acetylthreonine. Position 2 is a phosphothreonine (Thr2). Residues 41 to 61 form a helical membrane-spanning segment; the sequence is CAYFAVGGWFTGTTFVTSWYT. A chlorophyll a-binding site is contributed by His118. A helical transmembrane segment spans residues 125–141; that stretch reads GFMLRQFELARSVQLRP. Pheophytin a contacts are provided by Gln130 and Asn143. The helical transmembrane segment at 153 to 166 threads the bilayer; sequence VFVSVFLIYPLGQS. A chlorophyll a-binding site is contributed by His198. Residues 208 to 228 form a helical membrane-spanning segment; it reads AALLCAIHGATVENTLFEDGD. Residues His215 and Phe262 each coordinate a plastoquinone. His215 provides a ligand contact to Fe cation. Position 269 (His269) interacts with Fe cation. Residues 279-295 form a helical membrane-spanning segment; that stretch reads GLWMSALGVVGLALNLR.

It belongs to the reaction center PufL/M/PsbA/D family. In terms of assembly, PSII is composed of 1 copy each of membrane proteins PsbA, PsbB, PsbC, PsbD, PsbE, PsbF, PsbH, PsbI, PsbJ, PsbK, PsbL, PsbM, PsbT, PsbX, PsbY, PsbZ, Psb30/Ycf12, at least 3 peripheral proteins of the oxygen-evolving complex and a large number of cofactors. It forms dimeric complexes. The D1/D2 heterodimer binds P680, chlorophylls that are the primary electron donor of PSII, and subsequent electron acceptors. It shares a non-heme iron and each subunit binds pheophytin, quinone, additional chlorophylls, carotenoids and lipids. There is also a Cl(-1) ion associated with D1 and D2, which is required for oxygen evolution. The PSII complex binds additional chlorophylls, carotenoids and specific lipids. serves as cofactor.

It is found in the plastid. The protein localises to the chloroplast thylakoid membrane. The enzyme catalyses 2 a plastoquinone + 4 hnu + 2 H2O = 2 a plastoquinol + O2. In terms of biological role, photosystem II (PSII) is a light-driven water:plastoquinone oxidoreductase that uses light energy to abstract electrons from H(2)O, generating O(2) and a proton gradient subsequently used for ATP formation. It consists of a core antenna complex that captures photons, and an electron transfer chain that converts photonic excitation into a charge separation. The D1/D2 (PsbA/PsbD) reaction center heterodimer binds P680, the primary electron donor of PSII as well as several subsequent electron acceptors. D2 is needed for assembly of a stable PSII complex. This Cicer arietinum (Chickpea) protein is Photosystem II D2 protein.